Reading from the N-terminus, the 497-residue chain is TBC1 domain family member 22A (497 aa).

Residues 83–147 (RNHSQRQGRP…DAAPLQRSQS (65 aa)) are disordered. Residues Ser-112, Ser-125, and Ser-147 each carry the phosphoserine modification. The Rab-GAP TBC domain occupies 202–426 (GIPKPVRPMT…RLWDTYQSEP (225 aa)).

Homodimer. Interacts with ACBD3 and ARFGEF1. Interacts with YWHAB, YWHAE, YWHAG, YWHAH, YWHAQ and YWHAZ.

In terms of biological role, may act as a GTPase-activating protein for Rab family protein(s). The protein is TBC1 domain family member 22A (TBC1D22A) of Macaca fascicularis (Crab-eating macaque).